A 1216-amino-acid chain; its full sequence is DNA polymerase subunit gamma-1 (1216 aa).

Low complexity predominate over residues 27 to 37; the sequence is SSSVLDPVPSD. The disordered stretch occupies residues 27–50; that stretch reads SSSVLDPVPSDGQPQSQMPSSENG. Positions 38 to 50 are enriched in polar residues; that stretch reads GQPQSQMPSSENG. Positions 179–183 match the Exo I motif; the sequence is VFDVE. Residue D181 is the Exonuclease activity of the active site. Residues 250–258 carry the Exo II motif; sequence VGHNVSFDR. S289 contributes to the DNA binding site. Residues 301 to 314 are compositionally biased toward basic residues; it reads GKHKTQHPTKRGQK. A disordered region spans residues 301-321; it reads GKHKTQHPTKRGQKSQKNANG. Residues 377 to 385 carry the Exo III motif; that stretch reads YCARDVWAT. The disordered stretch occupies residues 488 to 518; that stretch reads TASASKLPIEGAGPFGDPMDQEDPGPPSEEE. The interval 491-552 is accessory-interacting determinant; it reads ASKLPIEGAG…RPQHLPGHPG (62 aa). The span at 506 to 518 shows a compositional bias: acidic residues; the sequence is MDQEDPGPPSEEE. R560 is a binding site for RNA. S574 lines the DNA pocket. Residues H731, G740, and K745 each coordinate RNA. DNA is bound by residues K783 and T826. The interval 835 to 841 is trigger loop; the sequence is TWLTASN. Residues S840 and R846 each contribute to the RNA site. A Pol A motif is present at residues 864–873; sequence VGADVDSQEL. 7 residues coordinate a 2'-deoxyribonucleoside 5'-triphosphate: D867, V868, S870, E872, R920, K924, and Y928. Mg(2+)-binding residues include D867 and V868. Positions 920–935 match the Pol B motif; that stretch reads REHAKVFNYGRIYGAG. DNA is bound by residues T1071 and S1072. Residues 1111–1118 carry the Pol C motif; the sequence is HDEVRYLV. D1112 serves as a coordination point for a 2'-deoxyribonucleoside 5'-triphosphate. A Mg(2+)-binding site is contributed by D1112.

The protein belongs to the DNA polymerase type-A family. In terms of assembly, heterotrimer composed of a catalytic subunit and a homodimer of accessory subunits (POLG:POLG2). Interacts with TTC3. Interacts with LIG3. Mg(2+) serves as cofactor.

The protein localises to the mitochondrion. It localises to the mitochondrion matrix. Its subcellular location is the mitochondrion nucleoid. The enzyme catalyses DNA(n) + a 2'-deoxyribonucleoside 5'-triphosphate = DNA(n+1) + diphosphate. The catalysed reaction is a 3'-end 2'-deoxyribonucleotidyl-deoxyribonucleotide-DNA + H2O = a 3'-end 2'-deoxyribonucleotide-DNA + a 2'-deoxyribonucleoside 5'-phosphate + H(+). It catalyses the reaction a 5'-end 2'-deoxyribose-2'-deoxyribonucleotide-DNA = (2E,4S)-4-hydroxypenten-2-al-5-phosphate + a 5'-end 5'-phospho-2'-deoxyribonucleoside-DNA + H(+). With respect to regulation, inhibited by dideoxynucleotides such as antiviral agent zalcitabine. Its function is as follows. Catalytic subunit of DNA polymerase gamma solely responsible for replication of mitochondrial DNA (mtDNA). Replicates both heavy and light strands of the circular mtDNA genome using a single-stranded DNA template, RNA primers and the four deoxyribonucleoside triphosphates as substrates. Has 5' -&gt; 3' polymerase activity. Functionally interacts with TWNK and SSBP1 at the replication fork to form a highly processive replisome, where TWNK unwinds the double-stranded DNA template prior to replication and SSBP1 covers the parental heavy strand to enable continuous replication of the entire mitochondrial genome. A single nucleotide incorporation cycle includes binding of the incoming nucleotide at the insertion site, a phosphodiester bond formation reaction that extends the 3'-end of the primer DNA, and translocation of the primer terminus to the post-insertion site. After completing replication of a mtDNA strand, mediates 3' -&gt; 5' exonucleolytic degradation at the nick to enable proper ligation. Highly accurate due to high nucleotide selectivity and 3' -&gt; 5' exonucleolytic proofreading. Proficiently corrects base substitutions, single-base additions and deletions in non-repetitive sequences and short repeats, but displays lower proofreading activity when replicating longer homopolymeric stretches. Exerts exonuclease activity toward single-stranded DNA and double-stranded DNA containing 3'-terminal mispairs. When a misincorporation occurs, transitions from replication to a pro-nucleolytic editing mode and removes the missincorporated nucleoside in the exonuclease active site. Proceeds via an SN2 nucleolytic mechanism in which Asp-198 catalyzes phosphodiester bond hydrolysis and Glu-200 stabilizes the leaving group. As a result the primer strand becomes one nucleotide shorter and is positioned in the post-insertion site, ready to resume DNA synthesis. Exerts 5'-deoxyribose phosphate (dRP) lyase activity and mediates repair-associated mtDNA synthesis (gap filling) in base-excision repair pathway. Catalyzes the release of the 5'-terminal 2-deoxyribose-5-phosphate sugar moiety from incised apurinic/apyrimidinic (AP) sites to produce a substrate for DNA ligase. The dRP lyase reaction does not require divalent metal ions and likely proceeds via a Schiff base intermediate in a beta-elimination reaction mechanism. This chain is DNA polymerase subunit gamma-1, found in Rattus norvegicus (Rat).